The sequence spans 397 residues: Elongation factor Tu (397 aa).

The region spanning 10–207 (KPHVNIGTIG…AVDESIPDPV (198 aa)) is the tr-type G domain. Residues 19-26 (GHVDHGKT) are G1. 19–26 (GHVDHGKT) contributes to the GTP binding site. Residue T26 coordinates Mg(2+). The G2 stretch occupies residues 63-67 (GITIN). The tract at residues 84–87 (DAPG) is G3. Residues 84-88 (DAPGH) and 139-142 (NKAD) each bind GTP. Residues 139-142 (NKAD) are G4. Positions 177–179 (SGL) are G5.

It belongs to the TRAFAC class translation factor GTPase superfamily. Classic translation factor GTPase family. EF-Tu/EF-1A subfamily. As to quaternary structure, monomer.

Its subcellular location is the cytoplasm. It carries out the reaction GTP + H2O = GDP + phosphate + H(+). Its function is as follows. GTP hydrolase that promotes the GTP-dependent binding of aminoacyl-tRNA to the A-site of ribosomes during protein biosynthesis. The sequence is that of Elongation factor Tu from Tropheryma whipplei (strain TW08/27) (Whipple's bacillus).